An 876-amino-acid polypeptide reads, in one-letter code: Radial spoke head 10 homolog B (876 aa).

2 stretches are compositionally biased toward basic and acidic residues: residues 1–16 (MVKE…DKSA) and 57–66 (PKRDSEHTYQ). A disordered region spans residues 1 to 72 (MVKEKKKADK…HTYQSEDETQ (72 aa)). MORN repeat units follow at residues 86 to 108 (YEGE…GGNT), 109 to 131 (YHGM…DGLK), 132 to 154 (YEGD…DGST), 155 to 177 (YEGE…TQPV), 179 to 201 (YIGH…QEGT), 204 to 226 (YEGD…SGNI), 227 to 249 (YEGQ…TTNE), 251 to 273 (YTGH…LKRI), 284 to 306 (YIGA…SGAM), and 307 to 329 (YEGE…NGRV). Disordered stretches follow at residues 360-386 (SQRS…LDGS) and 841-876 (EPPE…KKKK). A compositionally biased stretch (basic and acidic residues) spans 373 to 386 (ADREPETLRKLDGS). Residues 752–841 (EKYEKSKDEQ…FELDITVLKE (90 aa)) adopt a coiled-coil conformation.

As to quaternary structure, interacts with RSPH6A. Does not appear to be part of the axonemal radial spoke complexes 1 or 2.

The protein localises to the cytoplasm. The protein resides in the cytoskeleton. It localises to the cilium axoneme. It is found in the cell projection. Its subcellular location is the cilium. The protein localises to the flagellum. May function as part of the axonemal radial spoke complex 3 (RS3). Radial spoke complexes are important for ciliary motility. The protein is Radial spoke head 10 homolog B (Rsph10b) of Rattus norvegicus (Rat).